The chain runs to 403 residues: uncharacterized protein (403 aa).

Residues 55-88 (LTGSPNPQATPKQENKSNFFSEKQSVRENGNSSA) show a composition bias toward polar residues. The tract at residues 55–95 (LTGSPNPQATPKQENKSNFFSEKQSVRENGNSSAGEKKQKW) is disordered. Phosphoserine is present on S58. The J domain maps to 113–177 (QYYEILDLKK…NLRAHYDRTG (65 aa)). A helical membrane pass occupies residues 263-283 (SIFYQLLPLIVVILFAFLSNF).

It localises to the endoplasmic reticulum membrane. This is an uncharacterized protein from Schizosaccharomyces pombe (strain 972 / ATCC 24843) (Fission yeast).